Here is a 188-residue protein sequence, read N- to C-terminus: Adenine phosphoribosyltransferase (188 aa).

This sequence belongs to the purine/pyrimidine phosphoribosyltransferase family. In terms of assembly, homodimer.

It is found in the cytoplasm. It carries out the reaction AMP + diphosphate = 5-phospho-alpha-D-ribose 1-diphosphate + adenine. It functions in the pathway purine metabolism; AMP biosynthesis via salvage pathway; AMP from adenine: step 1/1. Its function is as follows. Catalyzes a salvage reaction resulting in the formation of AMP, that is energically less costly than de novo synthesis. This Burkholderia vietnamiensis (strain G4 / LMG 22486) (Burkholderia cepacia (strain R1808)) protein is Adenine phosphoribosyltransferase.